The following is a 241-amino-acid chain: RecQ-mediated genome instability protein 1 (241 aa).

Belongs to the RMI1 family. As to quaternary structure, forms a complex with SGS1 and TOP3.

It localises to the cytoplasm. The protein resides in the nucleus. Its function is as follows. Structure-specific DNA-binding protein with a preference for cruciform structures. Also binds single-stranded DNA (ssDNA). Functions together with SGS1 and TOP3 to maintain genome integrity. Essential for proper meiotic cell division. Required for normal S-phase progression and DNA damage response. Required for resistance to the DNA-damaging agent methyl methanesulfonate (MMS). The protein is RecQ-mediated genome instability protein 1 of Saccharomyces cerevisiae (strain ATCC 204508 / S288c) (Baker's yeast).